The chain runs to 465 residues: MAP kinase-interacting serine/threonine-protein kinase 2 (465 aa).

The interval E23 to T72 is disordered. The Nuclear localization signal motif lies at K60–K66. At S74 the chain carries Phosphoserine. Residues Q84–C388 enclose the Protein kinase domain. Residues L90 to V98 and K113 contribute to the ATP site. E160–M162 contributes to the staurosporine binding site. D205 acts as the Proton acceptor in catalysis. E209 contacts staurosporine. Phosphothreonine occurs at positions 244 and 249. 3 residues coordinate Zn(2+): C299, C311, and C314. T379 carries the post-translational modification Phosphothreonine. Phosphoserine is present on residues S437 and S440. The MAP kinase binding motif lies at L444 to R448. Residue S452 is modified to Phosphoserine.

It belongs to the protein kinase superfamily. CAMK Ser/Thr protein kinase family. In terms of assembly, monomer. Interacts with the C-terminal regions of EIF4G1 and EIF4G2; this interaction is promoted when MAPK pathways are repressed but repressed upon ERK proteins activation. Also binds to dephosphorylated MAPK3/ERK1 and MAPK1/ERK2. Isoform 1 interaction with phosphorylated MAPK3/ERK1 and MAPK1/ERK2 protects it from dephosphorylation and inactivation. Isoform 2 interacts with ESR2 and EIF4E in the nucleus. Mg(2+) is required as a cofactor. It depends on Zn(2+) as a cofactor. Dual phosphorylation of Thr-244 and Thr-249 activates the kinase. Phosphorylation of Thr-379 activates the kinase. Phosphorylated upon arsenic trioxide As(2)O(3) treatment. Phosphorylated by MAPK1/ERK2, MAPK11 and MAPK14. Dephosphorylated by PP2A. As to expression, ubiquitously expressed in all tissues examined. Isoform 2 is expressed at higher levels in the ovary than is isoform 1.

It is found in the nucleus. It localises to the PML body. The protein resides in the cytoplasm. The enzyme catalyses L-seryl-[protein] + ATP = O-phospho-L-seryl-[protein] + ADP + H(+). It catalyses the reaction L-threonyl-[protein] + ATP = O-phospho-L-threonyl-[protein] + ADP + H(+). Its activity is regulated as follows. Inhibited by CGP57380 and staurosporine. Activated by phosphorylation in a negative-feedback regulatory manner in response to chemotherapy (e.g. cytarabine) and thus impairs the generation of antileukemic responses. Its function is as follows. Serine/threonine-protein kinase that phosphorylates SFPQ/PSF, HNRNPA1 and EIF4E. May play a role in the response to environmental stress and cytokines. Appears to regulate translation by phosphorylating EIF4E, thus increasing the affinity of this protein for the 7-methylguanosine-containing mRNA cap. Required for mediating PP2A-inhibition-induced EIF4E phosphorylation. Triggers EIF4E shuttling from cytoplasm to nucleus. Isoform 1 displays a high basal kinase activity, but isoform 2 exhibits a very low kinase activity. Acts as a mediator of the suppressive effects of IFNgamma on hematopoiesis. Negative regulator for signals that control generation of arsenic trioxide As(2)O(3)-dependent apoptosis and anti-leukemic responses. Involved in anti-apoptotic signaling in response to serum withdrawal. The sequence is that of MAP kinase-interacting serine/threonine-protein kinase 2 (MKNK2) from Homo sapiens (Human).